The chain runs to 3391 residues: MNNQRKKTARPSFNMLKRARNRVSTGSQLAKRFSKGLLSGQGPMKLVMAFIAFLRFLAIPPTAGILARWGSFKKNGAIKVLRGFKKEISNMLNIMNRRKRSVTMLLMLLPTALAFHLTTRGGEPHMIVSKQEREKSLLFKTSVGVNMCTLIAMDLGELCEDTMTYKCPRITEAEPDDVDCWCNATDTWVTYGTCSQTGEHRRDKRSVALAPHVGLGLETRTETWMSSEGAWKQIQRVETWALRHPGFTVIALFLAHAIGTSITQKGIIFILLMLVTPSMAMRCVGIGSRDFVEGLSGATWVDVVLEHGSCVTTMAKDKPTLDIELLKTEVTNPAVLRKLCIEAKISNTTTDSRCPTQGEATLVEEQDANFVCRRTFVDRGWGNGCGLFGKGSLLTCAKFKCVTKLEGKIVQYENLKYSVIVTVHTGDQHQVGNETTEHGTIATITPQAPTSEIQLTDYGALTLDCSPRTGLDFNEMVLLTMKEKSWLVHKQWFLDLPLPWTSGASTSQETWNRQDLLVTFKTAHAKKQEVVVLGSQEGAMHTALTGATEIQTSGTTTIFAGHLKCRLKMDKLTLKGMSYVMCTGSFKLEKEVAETQHGTVLVQVKYEGTDAPCKIPFSTQDEKGVTQNRLITANPIVTDKEKPVNIETEPPFGESYIVVGAGEKALKQCWFKKGSSIGKMFEATARGARRMAILGDTAWDFGSIGGVFTSVGKLVHQVFGTAYGVLFSGVSWTMKIGIGILLTWLGLNSRSTSLSMTCIAVGMVTLYLGVMVQADSGCVINWKGRELKCGSGIFVTNEVHTWTEQYKFQADSPKRLSAAIGKAWEEGVCGIRSATRLENIMWKQISNELNHILLENDMKFTVVVGDVVGILAQGKKMIRPQPMEHKYSWKSWGKAKIIGADIQNTTFIIDGPDTPECPDDQRAWNIWEVEDYGFGIFTTNIWLKLRDSYTQMCDHRLMSAAIKDSKAVHADMGYWIESEKNETWKLARASFIEVKTCVWPKSHTLWSNGVLESEMIIPKIYGGPISQHNYRPGYFTQTAGPWHLGKLELDFDLCEGTTVVVDEHCGNRGPSLRTTTVTGKIIHEWCCRSCTLPPLRFKGEDGCWYGMEIRPVKEKEENLVKSMVSAGSGEVDSFSLGLLCISIMIEEVMRSRWSRKMLMTGTLAVFLLLIMGQLTWNDLIRLCIMVGANASDRMGMGTTYLALMATFKMRPMFAVGLLFRRLTSREVLLLTIGLSLVASVELPNSLEELGDGLAMGIMILKLLTDFQSHQLWATLLSLTFVKTTFSLHYAWKTMAMVLSIVSLFPLCLSTTSQKTTWLPVLLGSLGCKPLTMFLIAENKIWGRKSWPLNEGIMAVGIVSILLSSLLKNDVPLAGPLIAGGMLIACYVISGSSADLSLEKAAEVSWEEEAEHSGASHNILVEVQDDGTMKIKDEERDDTLTILLKATLLAVSGVYPLSIPATLFVWYFWQKKKQRSGVLWDTPSPPEVERAVLDDGIYRIMQRGLLGRSQVGVGVFQDGVFHTMWHVTRGAVLMYQGKRLEPSWASVKKDLISYGGGWRFQGSWNTGEEVQVIAVEPGKNPKNVQTAPGTFKTPEGEVGAIALDFKPGTSGSPIVNREGKIVGLYGNGVVTTSGTYVSAIAQAKASQEGPLPEIEDEVFRKRNLTIMDLHPGSGKTRRYLPAIVREAIRRNVRTLILAPTRVVASEMAEALKGMPIRYQTTAVKSEHTGKEIVDLMCHATFTMRLLSPVRVPNYNMIIMDEAHFTDPASIARRGYISTRVGMGEAAAIFMTATPPGSVEAFPQSNAVIQDEERDIPERSWNSGYEWITDFPGKTVWFVPSIKSGNDIANCLRKNGKRVIQLSRKTFDTEYQKTKNNDWDYVVTTDISEMGANFRADRVIDPRRCLKPVILKDGPERVILAGPMPVTVASAAQRRGRIGRNQNKEGDQYVYMGQPLNNDEDHAHWTEAKMLLDNINTPEGIIPALFEPEREKSAAIDGEYRLRGEARKTFVELMRRGDLPVWLSYKVASEGFQYSDRRWCFDGERNNQVLEENMDVEMWTKEGERKKLRPRWLDARTYSDPLALREFKEFAAGRRSVSGDLILEIGKLPQHLTQRAQNALDNLVMLHNSEQGGRAYRHAMEELPDTIETLMLLALIAVLTGGVTLFFLSGKGLGKTSIGLLCVMASSVLLWMASVEPHWIAASIILEFFLMVLLIPEPDRQRTPQDNQLAYVVIGLLFMILTVAANEMGLLETTKKDLGIGHVAAENHHHATMLDVDLRPASAWTLYAVATTVITPMMRHTIENTTANISLTAIANQAAILMGLDKGWPISKMDIGVPLLALGCYSQVNPLTLTAAVLMLVAHYAIIGPGLQAKATREAQKRTAAGIMKNPTVDGIVAIDLDPVVYDAKFEKQLGQIMLLILCTSQILLMRTTWALCESITLATGPLTTLWEGSPGKFWNTTIAVSMANIFRGSYLAGAGLAFSLMKSLGGGRRGTGAKGKHWERNGKDRLNQLSKSEFNTYKRSGIMEVDRSEAKEGLKRGETTKHAVSRGTAKLRWFVERNLVKPEGKVIDLGCGRGGWSYYCAGLKKVTEVKGYTKGGPGHEEPIPMATYGWNLVKLYSGKDVFFTPPEKCDTLLCDIGESSPNPTIEEGRTLRVLKMVEPWLRGNQFCIKILNPYMPSVVETLEQMQRKHGGMLVRNPLSRNSTHEMYWVSCGTGNIVSAVNMTSRMLLNRFTMAHRKPTYERDVDLGAGTRHVAVEPEVANLDIIGQRIENIKHEHKSTWHYDEDNPYKTWAYHGSYEVKPSGSASSMVNGVVKLLTKPWDAIPMVTQIAMTDTTPFGQQRVFKEKVDTRTPKAKRGTAQIMEVTARWLWGFLSRNKKPRICTREEFTRKVRSNAAIGAVFVDENQWNSAKEAVEDERFWDLVHRERELHKQGKCATCVYNMMGKREKKLGEFGKAKGSRAIWYMWLGARFLEFEALGFMNEDHWFSRENSLSGVEGEGLHKLGYILRDISKIPGGNMYADDTAGWDTRITEDDLQNEAKITDIMEPEHALLATSIFKLTYQNKVVRVQRPAKNGTVMDVISRRDQRGSGQVGTYGLNTFTNMEAQLIRQMESEGIFSPSELETPNLAERVLDWLEKYGVERLKRMAISGDDCVVKPIDDRFATALTALNDMGKVRKDIPQWEPSKGWNDWQQVPFCSHHFHQLIMKDGREIVVPCRNQDELVGRARVSQGAGWSLRETACLGKSYAQMWQLMYFHRRDLRLAANAICSAVPVDWVPTSRTTWSIHAHHQWMTTEDMLSVWNRVWIEENPWMEDKTHVSSWEDVPYLGKREDQWCGSLIGLTARATWATNIQVAINQVRRLIGNENYLDYMTSMKRFKNESDPEGALW.

Positions 1-15 (MNNQRKKTARPSFNM) are interaction with host EXOC1. Residues 1–101 (MNNQRKKTAR…LNIMNRRKRS (101 aa)) lie on the Cytoplasmic side of the membrane. Positions 37-72 (LLSGQGPMKLVMAFIAFLRFLAIPPTAGILARWGSF) are hydrophobic; homodimerization of capsid protein C. Residues 101–114 (SVTMLLMLLPTALA) constitute a propeptide, ER anchor for the capsid protein C, removed in mature form by serine protease NS3. A helical membrane pass occupies residues 102–119 (VTMLLMLLPTALAFHLTT). The Extracellular segment spans residues 120–242 (RGGEPHMIVS…QIQRVETWAL (123 aa)). The N-linked (GlcNAc...) asparagine; by host glycan is linked to Asn-183. Residues 243–260 (RHPGFTVIALFLAHAIGT) traverse the membrane as a helical segment. Ser-261 is a topological domain (cytoplasmic). Residues 262 to 280 (ITQKGIIFILLMLVTPSMA) traverse the membrane as a helical segment. At 281–725 (MRCVGIGSRD…HQVFGTAYGV (445 aa)) the chain is on the extracellular side. 4 disulfides stabilise this stretch: Cys-283/Cys-310, Cys-340/Cys-401, Cys-354/Cys-385, and Cys-372/Cys-396. N-linked (GlcNAc...) asparagine; by host glycosylation occurs at Asn-347. The interval 378–391 (DRGWGNGCGLFGKG) is fusion peptide. Asn-433 carries an N-linked (GlcNAc...) asparagine; by host glycan. 2 cysteine pairs are disulfide-bonded: Cys-465/Cys-565 and Cys-582/Cys-613. Residues 726-746 (LFSGVSWTMKIGIGILLTWLG) form a helical membrane-spanning segment. Topologically, residues 747–752 (LNSRST) are cytoplasmic. The chain crosses the membrane as a helical span at residues 753–773 (SLSMTCIAVGMVTLYLGVMVQ). Residues 774-1198 (ADSGCVINWK…NASDRMGMGT (425 aa)) are Extracellular-facing. Cystine bridges form between Cys-778/Cys-789, Cys-829/Cys-917, Cys-953/Cys-997, Cys-1054/Cys-1103, Cys-1065/Cys-1087, and Cys-1086/Cys-1090. Asn-904 and Asn-981 each carry an N-linked (GlcNAc...) asparagine; by host glycan. Asn-1189 carries N-linked (GlcNAc...) asparagine; by host glycosylation. Residues 1199–1219 (TYLALMATFKMRPMFAVGLLF) form a helical membrane-spanning segment. The Cytoplasmic segment spans residues 1220-1225 (RRLTSR). The helical transmembrane segment at 1226–1244 (EVLLLTIGLSLVASVELPN) threads the bilayer. Residues 1245–1268 (SLEELGDGLAMGIMILKLLTDFQS) are Lumenal-facing. Residues 1269-1289 (HQLWATLLSLTFVKTTFSLHY) form a helical membrane-spanning segment. Ala-1290 is a topological domain (cytoplasmic). The helical transmembrane segment at 1291–1309 (WKTMAMVLSIVSLFPLCLS) threads the bilayer. Over 1310–1314 (TTSQK) the chain is Lumenal. The chain crosses the membrane as a helical span at residues 1315–1335 (TTWLPVLLGSLGCKPLTMFLI). The Cytoplasmic portion of the chain corresponds to 1336 to 1345 (AENKIWGRKS). The chain crosses the membrane as a helical span at residues 1346-1366 (WPLNEGIMAVGIVSILLSSLL). Over 1367–1369 (KND) the chain is Lumenal. A helical transmembrane segment spans residues 1370–1390 (VPLAGPLIAGGMLIACYVISG). Residues 1391-1446 (SSADLSLEKAAEVSWEEEAEHSGASHNILVEVQDDGTMKIKDEERDDTLTILLKAT) are Cytoplasmic-facing. The interval 1397 to 1436 (LEKAAEVSWEEEAEHSGASHNILVEVQDDGTMKIKDEERD) is interacts with and activates NS3 protease. An intramembrane region (helical) is located at residues 1447 to 1467 (LLAVSGVYPLSIPATLFVWYF). The Cytoplasmic segment spans residues 1468–2147 (WQKKKQRSGV…MEELPDTIET (680 aa)). Residues 1475-1652 (SGVLWDTPSP…KASQEGPLPE (178 aa)) enclose the Peptidase S7 domain. Catalysis depends on charge relay system; for serine protease NS3 activity residues His-1525, Asp-1549, and Ser-1609. The 157-residue stretch at 1655 to 1811 (DEVFRKRNLT…QSNAVIQDEE (157 aa)) folds into the Helicase ATP-binding domain. Residues 1659–1662 (RKRN) form an important for RNA-binding region. 1668-1675 (LHPGSGKT) is a binding site for ATP. The DEAH box motif lies at 1759–1762 (DEAH). Positions 1821–1988 (SGYEWITDFP…IIPALFEPER (168 aa)) constitute a Helicase C-terminal domain. Lys-1863 carries the post-translational modification N6-acetyllysine; by host. A helical membrane pass occupies residues 2148–2168 (LMLLALIAVLTGGVTLFFLSG). The Lumenal portion of the chain corresponds to 2169-2170 (KG). An intramembrane region (helical) is located at residues 2171–2191 (LGKTSIGLLCVMASSVLLWMA). A topological domain (lumenal) is located at residue Ser-2192. The helical transmembrane segment at 2193 to 2213 (VEPHWIAASIILEFFLMVLLI) threads the bilayer. Topologically, residues 2214–2228 (PEPDRQRTPQDNQLA) are cytoplasmic. Residues 2229 to 2249 (YVVIGLLFMILTVAANEMGLL) traverse the membrane as a helical segment. The Lumenal segment spans residues 2250–2275 (ETTKKDLGIGHVAAENHHHATMLDVD). Residues 2276–2296 (LRPASAWTLYAVATTVITPMM) constitute an intramembrane region (helical). Residues 2297 to 2348 (RHTIENTTANISLTAIANQAAILMGLDKGWPISKMDIGVPLLALGCYSQVNP) are Lumenal-facing. Asn-2302 and Asn-2306 each carry an N-linked (GlcNAc...) asparagine; by host glycan. A helical transmembrane segment spans residues 2349-2369 (LTLTAAVLMLVAHYAIIGPGL). Over 2370–2414 (QAKATREAQKRTAAGIMKNPTVDGIVAIDLDPVVYDAKFEKQLGQ) the chain is Cytoplasmic. A helical membrane pass occupies residues 2415–2435 (IMLLILCTSQILLMRTTWALC). Residues 2436–2460 (ESITLATGPLTTLWEGSPGKFWNTT) are Lumenal-facing. Asn-2458 carries an N-linked (GlcNAc...) asparagine; by host glycan. A helical membrane pass occupies residues 2461 to 2481 (IAVSMANIFRGSYLAGAGLAF). Over 2482 to 3391 (SLMKSLGGGR…NESDPEGALW (910 aa)) the chain is Cytoplasmic. The mRNA cap 0-1 NS5-type MT domain occupies 2494-2755 (TGAKGKHWER…DVDLGAGTRH (262 aa)). Ser-2548 contacts S-adenosyl-L-methionine. Ser-2548 carries the phosphoserine modification. The active-site For 2'-O-MTase activity is the Lys-2553. The short motif at 2569-2572 (VIDL) is the SUMO-interacting motif element. Residues Gly-2578, Trp-2579, Thr-2596, Lys-2597, Asp-2623, and Val-2624 each coordinate S-adenosyl-L-methionine. Asp-2638 serves as the catalytic For 2'-O-MTase activity. Ile-2639 provides a ligand contact to S-adenosyl-L-methionine. Residues Lys-2672 and Glu-2708 each act as for 2'-O-MTase activity in the active site. S-adenosyl-L-methionine is bound at residue Tyr-2710. Glu-2929, His-2933, Cys-2938, and Cys-2941 together coordinate Zn(2+). Positions 3019 to 3168 (GNMYADDTAG…KPIDDRFATA (150 aa)) constitute a RdRp catalytic domain. Zn(2+) is bound by residues His-3203, Cys-3219, and Cys-3338.

In the N-terminal section; belongs to the class I-like SAM-binding methyltransferase superfamily. mRNA cap 0-1 NS5-type methyltransferase family. Homodimer. Interacts (via N-terminus) with host EXOC1 (via C-terminus); this interaction results in EXOC1 degradation through the proteasome degradation pathway. In terms of assembly, forms heterodimers with envelope protein E in the endoplasmic reticulum and Golgi. As to quaternary structure, homodimer; in the endoplasmic reticulum and Golgi. Interacts with protein prM. Interacts with non-structural protein 1. Homodimer; Homohexamer when secreted. Interacts with envelope protein E. In terms of assembly, interacts (via N-terminus) with serine protease NS3. As to quaternary structure, forms a heterodimer with serine protease NS3. May form homooligomers. Forms a heterodimer with NS2B. Interacts with NS4B. Interacts with unphosphorylated RNA-directed RNA polymerase NS5; this interaction stimulates RNA-directed RNA polymerase NS5 guanylyltransferase activity. Interacts with host SHFL. In terms of assembly, interacts with host MAVS; this interaction inhibits the synthesis of IFN-beta. Interacts with host SHFL. Interacts with host AUP1; the interaction occurs in the presence of Dengue virus NS4B and induces lipophagy which facilitates production of virus progeny particles. As to quaternary structure, interacts with serine protease NS3. Homodimer. Interacts with host STAT2; this interaction inhibits the phosphorylation of the latter, and, when all viral proteins are present (polyprotein), targets STAT2 for degradation. Interacts with serine protease NS3. In terms of processing, specific enzymatic cleavages in vivo yield mature proteins. Cleavages in the lumen of endoplasmic reticulum are performed by host signal peptidase, whereas cleavages in the cytoplasmic side are performed by serine protease NS3. Signal cleavage at the 2K-4B site requires a prior NS3 protease-mediated cleavage at the 4A-2K site. Cleaved in post-Golgi vesicles by a host furin, releasing the mature small envelope protein M, and peptide pr. This cleavage is incomplete as up to 30% of viral particles still carry uncleaved prM. Post-translationally, N-glycosylated. In terms of processing, N-glycosylated. The excreted form is glycosylated and this is required for efficient secretion of the protein from infected cells. Acetylated by host KAT5. Acetylation modulates NS3 RNA-binding and unwinding activities and plays an important positive role for viral replication. Post-translationally, sumoylation of RNA-directed RNA polymerase NS5 increases NS5 protein stability allowing proper viral RNA replication. In terms of processing, phosphorylated on serines residues. This phosphorylation may trigger NS5 nuclear localization.

The protein localises to the virion. The protein resides in the host nucleus. Its subcellular location is the host cytoplasm. It localises to the host perinuclear region. It is found in the secreted. The protein localises to the virion membrane. The protein resides in the host endoplasmic reticulum membrane. Its subcellular location is the host mitochondrion. The enzyme catalyses Selective hydrolysis of -Xaa-Xaa-|-Yaa- bonds in which each of the Xaa can be either Arg or Lys and Yaa can be either Ser or Ala.. It carries out the reaction RNA(n) + a ribonucleoside 5'-triphosphate = RNA(n+1) + diphosphate. It catalyses the reaction a ribonucleoside 5'-triphosphate + H2O = a ribonucleoside 5'-diphosphate + phosphate + H(+). The catalysed reaction is ATP + H2O = ADP + phosphate + H(+). The enzyme catalyses a 5'-end (5'-triphosphoguanosine)-ribonucleoside in mRNA + S-adenosyl-L-methionine = a 5'-end (N(7)-methyl 5'-triphosphoguanosine)-ribonucleoside in mRNA + S-adenosyl-L-homocysteine. It carries out the reaction a 5'-end (N(7)-methyl 5'-triphosphoguanosine)-ribonucleoside in mRNA + S-adenosyl-L-methionine = a 5'-end (N(7)-methyl 5'-triphosphoguanosine)-(2'-O-methyl-ribonucleoside) in mRNA + S-adenosyl-L-homocysteine + H(+). Its function is as follows. Plays a role in virus budding by binding to the cell membrane and gathering the viral RNA into a nucleocapsid that forms the core of a mature virus particle. During virus entry, may induce genome penetration into the host cytoplasm after hemifusion induced by the surface proteins. Can migrate to the cell nucleus where it modulates host functions. Overcomes the anti-viral effects of host EXOC1 by sequestering and degrading the latter through the proteasome degradation pathway. Functionally, inhibits RNA silencing by interfering with host Dicer. In terms of biological role, prevents premature fusion activity of envelope proteins in trans-Golgi by binding to envelope protein E at pH6.0. After virion release in extracellular space, gets dissociated from E dimers. Acts as a chaperone for envelope protein E during intracellular virion assembly by masking and inactivating envelope protein E fusion peptide. prM is the only viral peptide matured by host furin in the trans-Golgi network probably to avoid catastrophic activation of the viral fusion activity in acidic Golgi compartment prior to virion release. prM-E cleavage is inefficient, and many virions are only partially matured. These uncleaved prM would play a role in immune evasion. Its function is as follows. May play a role in virus budding. Exerts cytotoxic effects by activating a mitochondrial apoptotic pathway through M ectodomain. May display a viroporin activity. Functionally, binds to host cell surface receptor and mediates fusion between viral and cellular membranes. Envelope protein is synthesized in the endoplasmic reticulum in the form of heterodimer with protein prM. They play a role in virion budding in the ER, and the newly formed immature particle is covered with 60 spikes composed of heterodimer between precursor prM and envelope protein E. The virion is transported to the Golgi apparatus where the low pH causes dissociation of PrM-E heterodimers and formation of E homodimers. prM-E cleavage is inefficient, and many virions are only partially matured. These uncleaved prM would play a role in immune evasion. In terms of biological role, involved in immune evasion, pathogenesis and viral replication. Once cleaved off the polyprotein, is targeted to three destinations: the viral replication cycle, the plasma membrane and the extracellular compartment. Essential for viral replication. Required for formation of the replication complex and recruitment of other non-structural proteins to the ER-derived membrane structures. Excreted as a hexameric lipoparticle that plays a role against host immune response. Antagonizing the complement function. Binds to the host macrophages and dendritic cells. Inhibits signal transduction originating from Toll-like receptor 3 (TLR3). Disrupts the host endothelial glycocalyx layer of host pulmonary microvascular endothelial cells, inducing degradation of sialic acid and shedding of heparan sulfate proteoglycans. NS1 induces expression of sialidases, heparanase, and activates cathepsin L, which activates heparanase via enzymatic cleavage. These effects are probably linked to the endothelial hyperpermeability observed in severe dengue disease. Its function is as follows. Component of the viral RNA replication complex that functions in virion assembly and antagonizes the host immune response. Functionally, required cofactor for the serine protease function of NS3. May have membrane-destabilizing activity and form viroporins. In terms of biological role, displays three enzymatic activities: serine protease, NTPase and RNA c. NS3 serine protease, in association with NS2B, performs its autocleavage and cleaves the polyprotein at dibasic sites in the cytoplasm: C-prM, NS2A-NS2B, NS2B-NS3, NS3-NS4A, NS4A-2K and NS4B-NS5. NS3 RNA helicase binds RNA and unwinds dsRNA in the 3' to 5' direction. Regulates the ATPase activity of the NS3 helicase activity. NS4A allows NS3 helicase to conserve energy during unwinding. Plays a role in the inhibition of the host innate immune response. Interacts with host MAVS and thereby prevents the interaction between RIGI and MAVS. In turn, IFN-beta production is impaired. Interacts with host AUP1 which mediates induction of lipophagy in host cells and facilitates production of virus progeny particles. Its function is as follows. Functions as a signal peptide for NS4B and is required for the interferon antagonism activity of the latter. Functionally, induces the formation of ER-derived membrane vesicles where the viral replication takes place. Inhibits interferon (IFN)-induced host STAT1 phosphorylation and nuclear translocation, thereby preventing the establishment of cellular antiviral state by blocking the IFN-alpha/beta pathway. In terms of biological role, replicates the viral (+) and (-) RNA genome, and performs the capping of genomes in the cytoplasm. NS5 methylates viral RNA cap at guanine N-7 and ribose 2'-O positions. Besides its role in RNA genome replication, also prevents the establishment of cellular antiviral state by blocking the interferon-alpha/beta (IFN-alpha/beta) signaling pathway. Inhibits host TYK2 and STAT2 phosphorylation, thereby preventing activation of JAK-STAT signaling pathway. In Aedes aegypti (Yellowfever mosquito), this protein is Genome polyprotein.